The sequence spans 208 residues: MGISRDNWHKRRKTGGKRKPYHKKRKYELGRPAANTKIGPRRIHTVRVRGGNKKYRALRLDVGNFSWGSECCTRKTRIIDVVYNASNNELVRTKTLVKNCIVLIDSTPYRQWYESHYALPLGRKKGAKLTPEEEEILNKKRSKKIQKKYDERKKNAKISSLLEEQFQQGKLLACIASRPGQCGRADGYVLEGKELEFYLRKIKARKGK.

Residues 1–27 (MGISRDNWHKRRKTGGKRKPYHKKRKY) are disordered. Residue Gly-2 is the site of N-myristoyl glycine attachment. The span at 8-26 (WHKRRKTGGKRKPYHKKRK) shows a compositional bias: basic residues. N6-acetyllysine is present on residues Lys-37 and Lys-128. The residue at position 130 (Thr-130) is a Phosphothreonine. Residue Ser-160 is modified to Phosphoserine. Residues Lys-170 and Lys-193 each participate in a glycyl lysine isopeptide (Lys-Gly) (interchain with G-Cter in SUMO2) cross-link.

The protein belongs to the eukaryotic ribosomal protein eS8 family. As to quaternary structure, component of the small ribosomal subunit. Identified in a IGF2BP1-dependent mRNP granule complex containing untranslated mRNAs. Part of the small subunit (SSU) processome, composed of more than 70 proteins and the RNA chaperone small nucleolar RNA (snoRNA) U3.

Its subcellular location is the cytoplasm. The protein resides in the membrane. It localises to the nucleus. The protein localises to the nucleolus. Component of the small ribosomal subunit. The ribosome is a large ribonucleoprotein complex responsible for the synthesis of proteins in the cell. Part of the small subunit (SSU) processome, first precursor of the small eukaryotic ribosomal subunit. During the assembly of the SSU processome in the nucleolus, many ribosome biogenesis factors, an RNA chaperone and ribosomal proteins associate with the nascent pre-rRNA and work in concert to generate RNA folding, modifications, rearrangements and cleavage as well as targeted degradation of pre-ribosomal RNA by the RNA exosome. This chain is Small ribosomal subunit protein eS8 (Rps8), found in Mus musculus (Mouse).